The following is a 159-amino-acid chain: GDP-mannose mannosyl hydrolase (159 aa).

Substrate contacts are provided by residues 2-3 (FL), phenylalanine 8, and arginine 36. A Nudix hydrolase domain is found at 13-153 (RSTPLVSLDF…SRAYFLAEKR (141 aa)). Mg(2+) contacts are provided by glycine 49, glutamate 69, and glutamine 122. The short motif at 50 to 71 (GRVQKDETLEAAFERLTMAELG) is the Nudix box element.

Belongs to the Nudix hydrolase family. As to quaternary structure, homodimer. Requires Mg(2+) as cofactor.

The catalysed reaction is GDP-alpha-D-mannose + H2O = D-mannose + GDP + H(+). Its function is as follows. Hydrolyzes GDP-mannose. The protein is GDP-mannose mannosyl hydrolase of Escherichia coli O157:H7.